The sequence spans 134 residues: Small ribosomal subunit protein uS12 (134 aa).

Residues 1–30 are disordered; it reads MPTINQLVKHGREKVKEKSKSPALQGHPQK. A 3-methylthioaspartic acid modification is found at Asp89. The segment at 106-134 is disordered; that stretch reads GVENRRQSRSKYGAKRPKAGAAAGAKGKK. Basic residues predominate over residues 112–123; that stretch reads QSRSKYGAKRPK. Positions 124–134 are enriched in low complexity; that stretch reads AGAAAGAKGKK.

Belongs to the universal ribosomal protein uS12 family. In terms of assembly, part of the 30S ribosomal subunit. Contacts proteins S8 and S17. May interact with IF1 in the 30S initiation complex.

In terms of biological role, with S4 and S5 plays an important role in translational accuracy. Interacts with and stabilizes bases of the 16S rRNA that are involved in tRNA selection in the A site and with the mRNA backbone. Located at the interface of the 30S and 50S subunits, it traverses the body of the 30S subunit contacting proteins on the other side and probably holding the rRNA structure together. The combined cluster of proteins S8, S12 and S17 appears to hold together the shoulder and platform of the 30S subunit. The polypeptide is Small ribosomal subunit protein uS12 (Fervidobacterium nodosum (strain ATCC 35602 / DSM 5306 / Rt17-B1)).